The sequence spans 683 residues: Transforming growth factor-beta-induced protein ig-h3 (683 aa).

Residues 1–23 (MALLMRLLTLALALSVGPAGTLA) form the signal peptide. The residue at position 37 (serine 37) is a Phosphoserine. Residues 45-99 (GPNVCAVQKVIGTNKKYFTNCKQWYQRKICGKSTVISYECCPGYEKVPGEKGCPA) form the EMI domain. 5 disulfides stabilise this stretch: cysteine 49–cysteine 85, cysteine 74–cysteine 339, cysteine 84–cysteine 97, cysteine 214–cysteine 317, and cysteine 473–cysteine 478. The residue at position 65 (cysteine 65) is an S-cysteinyl cysteine. FAS1 domains follow at residues 103–236 (LSNL…DKVI), 240–371 (TNNI…DELL), 375–498 (SAKT…DRML), and 502–632 (MGTV…NTVL). The Cell attachment site signature appears at 642–644 (RGD).

In terms of assembly, binds to type I, II, and IV collagens. Gamma-carboxylation is controversial. Gamma-carboxyglutamated; gamma-carboxyglutamate residues are formed by vitamin K dependent carboxylation; this may be required for calcium binding. According to a more recent report, does not contain vitamin K-dependent gamma-carboxyglutamate residues. Post-translationally, the EMI domain contains 2 expected intradomain disulfide bridges (Cys-49-Cys85 and Cys-84-Cys-97) and one unusual interdomain disulfide bridge to the second FAS1 domain (Cys-74-Cys-339). This arrangement violates the predicted disulfide bridge pattern of an EMI domain. Expressed in heart, kidney, liver, skeletal muscle, testis, thyroid and uterus.

The protein resides in the secreted. Its subcellular location is the extracellular space. It localises to the extracellular matrix. Functionally, plays a role in cell adhesion. May play a role in cell-collagen interactions. The protein is Transforming growth factor-beta-induced protein ig-h3 (Tgfbi) of Mus musculus (Mouse).